Consider the following 530-residue polypeptide: Glucose-6-phosphate 1-dehydrogenase (530 aa).

Residues 53–60, Arg-87, Tyr-162, and Lys-186 contribute to the NADP(+) site; that span reads GASGDLAK. D-glucose 6-phosphate is bound by residues Lys-186, 216-220, Glu-254, and Asp-273; that span reads HYLGK. The active-site Proton acceptor is the His-278. Arg-372 contributes to the NADP(+) binding site. Residues Lys-375 and Arg-380 each contribute to the D-glucose 6-phosphate site. Positions 381, 385, and 408 each coordinate NADP(+). Gln-410 serves as a coordination point for D-glucose 6-phosphate. NADP(+) contacts are provided by residues 416 to 418, 436 to 438, Arg-502, Tyr-518, and Trp-524; these read YAK and DLT.

The protein belongs to the glucose-6-phosphate dehydrogenase family.

It is found in the cytoplasm. It localises to the cytosol. The catalysed reaction is D-glucose 6-phosphate + NADP(+) = 6-phospho-D-glucono-1,5-lactone + NADPH + H(+). Its pathway is carbohydrate degradation; pentose phosphate pathway; D-ribulose 5-phosphate from D-glucose 6-phosphate (oxidative stage): step 1/3. Its function is as follows. Cytosolic glucose-6-phosphate dehydrogenase that catalyzes the first and rate-limiting step of the oxidative branch within the pentose phosphate pathway/shunt, an alternative route to glycolysis for the dissimilation of carbohydrates and a major source of reducing power and metabolic intermediates for fatty acid and nucleic acid biosynthetic processes. The polypeptide is Glucose-6-phosphate 1-dehydrogenase (g6pd) (Takifugu rubripes (Japanese pufferfish)).